Reading from the N-terminus, the 205-residue chain is Small ribosomal subunit protein uS4 (205 aa).

The segment at 18-46 is disordered; that stretch reads NIWGRSKSPVNRREYGPGQHGQRRKGKLS. The 64-residue stretch at 94-157 folds into the S4 RNA-binding domain; sequence RRLDAVVYRA…RQMTLVLEAQ (64 aa).

Belongs to the universal ribosomal protein uS4 family. As to quaternary structure, part of the 30S ribosomal subunit. Contacts protein S5. The interaction surface between S4 and S5 is involved in control of translational fidelity.

Its function is as follows. One of the primary rRNA binding proteins, it binds directly to 16S rRNA where it nucleates assembly of the body of the 30S subunit. In terms of biological role, with S5 and S12 plays an important role in translational accuracy. In Xanthobacter autotrophicus (strain ATCC BAA-1158 / Py2), this protein is Small ribosomal subunit protein uS4.